The chain runs to 386 residues: S-adenosylmethionine synthase (386 aa).

His-16 contributes to the ATP binding site. Asp-18 serves as a coordination point for Mg(2+). Glu-44 provides a ligand contact to K(+). 2 residues coordinate L-methionine: Glu-57 and Gln-100. Residues 100 to 110 (QSGDIAMGVDE) are flexible loop. ATP-binding positions include 165–167 (DAK), Asp-240, 246–247 (RK), Ala-263, and Lys-267. Asp-240 serves as a coordination point for L-methionine. Lys-271 is an L-methionine binding site.

Belongs to the AdoMet synthase family. As to quaternary structure, homotetramer; dimer of dimers. Requires Mg(2+) as cofactor. The cofactor is K(+).

It localises to the cytoplasm. It carries out the reaction L-methionine + ATP + H2O = S-adenosyl-L-methionine + phosphate + diphosphate. It functions in the pathway amino-acid biosynthesis; S-adenosyl-L-methionine biosynthesis; S-adenosyl-L-methionine from L-methionine: step 1/1. In terms of biological role, catalyzes the formation of S-adenosylmethionine (AdoMet) from methionine and ATP. The overall synthetic reaction is composed of two sequential steps, AdoMet formation and the subsequent tripolyphosphate hydrolysis which occurs prior to release of AdoMet from the enzyme. The polypeptide is S-adenosylmethionine synthase (Hahella chejuensis (strain KCTC 2396)).